A 110-amino-acid chain; its full sequence is MSELKTVGLFAITALAEIVGCYLPYLWLREGKSIWLLVPSALSLVAFVWLLTLHPTAVGRVYAAYGGVYVTMAILWLWAVDGIRPTTWDILGTSVALLGMAIIMFAPRNT.

4 consecutive transmembrane segments (helical) span residues 7 to 27, 33 to 53, 63 to 83, and 87 to 107; these read VGLF…PYLW, SIWL…LLTL, AAYG…VDGI, and TWDI…MFAP.

This sequence belongs to the UPF0060 family.

It is found in the cell inner membrane. This Psychrobacter cryohalolentis (strain ATCC BAA-1226 / DSM 17306 / VKM B-2378 / K5) protein is UPF0060 membrane protein Pcryo_1341.